The chain runs to 131 residues: DNA-binding protein inhibitor ID-4 (131 aa).

Residues 36 to 88 (ARYKMEEEETLCLQYDMNDCYSRLKRLVPTIPPNKKVSKVEILQHVIDYILDL) form the bHLH domain.

In terms of assembly, heterodimer with other HLH proteins. During embryonic development, expressed in a number of neural tissues, including Rohon-Beard neurons, olfactory placode, eye primordia, and the trigeminal ganglia. Also expressed in other organs including the pronephros and liver primordium. Pronephric development begins by stage 25 and increases during tailbud stages. Expressed in both the tubules and the duct. As embryogenesis progresses, expressed in the migrating melanocytes and lateral line structures.

It localises to the nucleus. Its function is as follows. Transcriptional regulator (lacking a basic DNA binding domain) which negatively regulates the basic helix-loop-helix (bHLH) transcription factors by forming heterodimers and inhibiting their DNA binding and transcriptional activity. Inhibits the activity of both neurogenic (neurog1/neurogenin, neurod1/neuroD) and myogenic (myod1/myoD) bHLH factors. The protein is DNA-binding protein inhibitor ID-4 of Xenopus laevis (African clawed frog).